The primary structure comprises 184 residues: Tumor necrosis factor alpha-induced protein 8-like protein 2 (184 aa).

Phosphoserine is present on S3.

It belongs to the TNFAIP8 family. TNFAIP8L2 subfamily. As to quaternary structure, may interact with CASP8; however, such result is unclear since could not reproduce the interaction with CASP8. Interacts with RAC1. In terms of processing, phosphorylated by TAK1/MAP3K7; this phosphorylation triggers association with BTRC and subsequent ubiquitination and degradation. Ubiquitinated in a BTRC-depdent manner; leading to degradation mediated through the proteasome pathway.

It is found in the cytoplasm. The protein localises to the nucleus. Its subcellular location is the lysosome. In terms of biological role, acts as a negative regulator of innate and adaptive immunity by maintaining immune homeostasis. Plays a regulatory role in the Toll-like signaling pathway by determining the strength of LPS-induced signaling and gene expression. Inhibits TCR-mediated T-cell activation and negatively regulate T-cell function to prevent hyperresponsiveness. Also inhibits autolysosome formation via negatively modulating MTOR activation by interacting with RAC1 and promoting the disassociation of the RAC1-MTOR complex. Plays an essential role in NK-cell biology by acting as a checkpoint and displaying an expression pattern correlating with NK-cell maturation process and by negatively regulating NK-cell maturation and antitumor immunity. Mechanistically, suppresses IL-15-triggered mTOR activity in NK-cells. The protein is Tumor necrosis factor alpha-induced protein 8-like protein 2 (Tnfaip8l2) of Rattus norvegicus (Rat).